A 234-amino-acid polypeptide reads, in one-letter code: Purine nucleoside phosphorylase DeoD-type (234 aa).

Histidine 5 contributes to the a purine D-ribonucleoside binding site. Phosphate is bound by residues glycine 21, arginine 25, arginine 44, and 88-91 (RIGS). A purine D-ribonucleoside-binding positions include 180 to 182 (EME) and 204 to 205 (SD). Aspartate 205 serves as the catalytic Proton donor.

It belongs to the PNP/UDP phosphorylase family. In terms of assembly, homohexamer; trimer of homodimers.

The catalysed reaction is a purine D-ribonucleoside + phosphate = a purine nucleobase + alpha-D-ribose 1-phosphate. It carries out the reaction a purine 2'-deoxy-D-ribonucleoside + phosphate = a purine nucleobase + 2-deoxy-alpha-D-ribose 1-phosphate. Functionally, catalyzes the reversible phosphorolytic breakdown of the N-glycosidic bond in the beta-(deoxy)ribonucleoside molecules, with the formation of the corresponding free purine bases and pentose-1-phosphate. The polypeptide is Purine nucleoside phosphorylase DeoD-type (Colwellia psychrerythraea (strain 34H / ATCC BAA-681) (Vibrio psychroerythus)).